A 139-amino-acid chain; its full sequence is Putative pre-16S rRNA nuclease (139 aa).

This sequence belongs to the YqgF nuclease family.

Its subcellular location is the cytoplasm. In terms of biological role, could be a nuclease involved in processing of the 5'-end of pre-16S rRNA. The sequence is that of Putative pre-16S rRNA nuclease from Streptococcus pyogenes serotype M49 (strain NZ131).